A 243-amino-acid polypeptide reads, in one-letter code: MLIEHEVAFVLHVRPWRETSLLVEVLTQAYGRLGLIARGVQGLKKQTLRAALQPLQWIRFSAIQRGELGQLRQAEALDTAPRLKGETMLASFYINELLLRLVPRHAPVNELYLAYSQTRERLRTNDSLAWSLRLFELDILETLGVGFNLECDANGTPLDPAARYVLDPLEGPRLLLSEHNNAERRDTATGHVLLALAHKQIPNTNDLAGLRRSMRAVLLHHLGGRGLKSWEMIAAFRHQDTSP.

The protein belongs to the RecO family.

Functionally, involved in DNA repair and RecF pathway recombination. In Xylella fastidiosa (strain M23), this protein is DNA repair protein RecO.